We begin with the raw amino-acid sequence, 374 residues long: MNTNLLDFDLDGLAAYCEQLGEKRFRATQLFRWIHQRGASDFDQMSDLAKSLREKLKACAHITALPVLTEHVSADGTVKWLFDVGGGDAVEAVFIPEDDRGTLCVSSQAGCAVGCRFCSTGHQGFSRNLSTGEILAQLWYAEHSLRKRLGTGGERVISNVVMMGMGEPLQNYTALVPALRAMLDDHGYGLSRRRVTVSTSGVVPMIDRLSQDCAVAMAVSLHAPNDELRDPLVPLNRKYPIHELLDACERYLEFAPRDFITFEYCMLDGVNDQPEHARQLIELVRARGDGRSWCKFNLIPFNPFPASGLLRSPAARVTEFASLLSNAGIVTTVRKTRGDDIDAACGQLAGDVKDRTRAAERMARQRTIVLKQVP.

The Proton acceptor role is filled by E91. Residues E97–D340 enclose the Radical SAM core domain. A disulfide bond links C104 and C345. Positions 111, 115, and 118 each coordinate [4Fe-4S] cluster. S-adenosyl-L-methionine contacts are provided by residues G166 to E167, S198, S220 to H222, and N302. The active-site S-methylcysteine intermediate is the C345.

It belongs to the radical SAM superfamily. RlmN family. [4Fe-4S] cluster serves as cofactor.

The protein resides in the cytoplasm. The enzyme catalyses adenosine(2503) in 23S rRNA + 2 reduced [2Fe-2S]-[ferredoxin] + 2 S-adenosyl-L-methionine = 2-methyladenosine(2503) in 23S rRNA + 5'-deoxyadenosine + L-methionine + 2 oxidized [2Fe-2S]-[ferredoxin] + S-adenosyl-L-homocysteine. The catalysed reaction is adenosine(37) in tRNA + 2 reduced [2Fe-2S]-[ferredoxin] + 2 S-adenosyl-L-methionine = 2-methyladenosine(37) in tRNA + 5'-deoxyadenosine + L-methionine + 2 oxidized [2Fe-2S]-[ferredoxin] + S-adenosyl-L-homocysteine. Functionally, specifically methylates position 2 of adenine 2503 in 23S rRNA and position 2 of adenine 37 in tRNAs. m2A2503 modification seems to play a crucial role in the proofreading step occurring at the peptidyl transferase center and thus would serve to optimize ribosomal fidelity. This chain is Dual-specificity RNA methyltransferase RlmN, found in Delftia acidovorans (strain DSM 14801 / SPH-1).